Reading from the N-terminus, the 504-residue chain is Tyrosine-protein phosphatase non-receptor type substrate 1 (504 aa).

The first 30 residues, 1 to 30, serve as a signal peptide directing secretion; sequence MEPAGPAPGRLGPLLCLLLAASCAWSGVAG. Residues 31-373 are Extracellular-facing; sequence EEELQVIQPD…NTGSNERNIY (343 aa). The 106-residue stretch at 32 to 137 folds into the Ig-like V-type domain; it reads EELQVIQPDK…SPDDVEFKSG (106 aa). Cystine bridges form between Cys55–Cys121 and Cys170–Cys228. Ig-like C1-type domains follow at residues 148-247 and 254-348; these read PSAP…ANLS and PTLE…HDLK. Asn245, Asn270, Asn292, and Asn319 each carry an N-linked (GlcNAc...) asparagine glycan. A disulfide bond links Cys273 and Cys331. Residues 336–355 show a composition bias toward basic and acidic residues; that stretch reads DGQPAVSKSHDLKVSAHPKE. A disordered region spans residues 336–364; that stretch reads DGQPAVSKSHDLKVSAHPKEQGSNTAAEN. Residues 374–394 traverse the membrane as a helical segment; sequence IVVGVVCTLLVALLMAALYLV. At 395 to 504 the chain is on the cytoplasmic side; it reads RIRQKKAQGS…EYASVQVPRK (110 aa). The disordered stretch occupies residues 402-504; sequence QGSTSSTRLH…EYASVQVPRK (103 aa). Positions 409 to 421 are enriched in basic and acidic residues; sequence RLHEPEKNAREIT. Tyr429 bears the Phosphotyrosine; by Tyr-kinases mark. An SH2-binding motif is present at residues 429-432; sequence YADL. The SH3-binding motif lies at 439–444; that stretch reads KPAPQA. A compositionally biased stretch (polar residues) spans 446 to 467; that stretch reads EPNNHTEYASIQTSPQPASEDT. Residues Tyr453 and Tyr470 each carry the phosphotyrosine; by Tyr-kinases modification. 3 consecutive short sequence motifs (SH2-binding) follow at residues 453–456, 470–473, and 496–499; these read YASI, YADL, and YASV. Residue Tyr496 is modified to Phosphotyrosine.

In terms of assembly, binds PTPN11 when tyrosine-phosphorylated, except in macrophages, where it primarily binds PTPN6. Binds GRB2 in vitro. Binds FGR. Binds JAK2 irrespective of its phosphorylation status and forms a stable complex. Binds SCAP1 and/or SCAP2. The resulting complex recruits FYB1. Binds PTK2B. Interacts with TRIM2. N-glycosylated. In terms of processing, phosphorylated on tyrosine residues in response to stimulation with EGF, growth hormone, insulin and PDGF. Dephosphorylated by PTPN11. As to expression, ubiquitous. Highly expressed in brain. Detected on myeloid cells, but not T-cells. Detected at lower levels in heart, placenta, lung, testis, ovary, colon, liver, small intestine, prostate, spleen, kidney, skeletal muscle and pancreas.

Its subcellular location is the membrane. Its function is as follows. Immunoglobulin-like cell surface receptor for CD47. Acts as docking protein and induces translocation of PTPN6, PTPN11 and other binding partners from the cytosol to the plasma membrane. Supports adhesion of cerebellar neurons, neurite outgrowth and glial cell attachment. May play a key role in intracellular signaling during synaptogenesis and in synaptic function. Involved in the negative regulation of receptor tyrosine kinase-coupled cellular responses induced by cell adhesion, growth factors or insulin. Mediates negative regulation of phagocytosis, mast cell activation and dendritic cell activation. CD47 binding prevents maturation of immature dendritic cells and inhibits cytokine production by mature dendritic cells. Plays a role in antiviral immunity and limits new world arenavirus infection by decreasing virus internalization. Receptor for THBS1. Interaction with THBS1 stimulates phosphorylation of SIRPA. In response to THBS1, involved in ROS signaling in non-phagocytic cells, stimulating NADPH oxidase-derived ROS production. The polypeptide is Tyrosine-protein phosphatase non-receptor type substrate 1 (SIRPA) (Homo sapiens (Human)).